The following is a 57-amino-acid chain: MAVPKRKMSRSNTRHRRSQWKAAVPTLVACERCHEPKLQHIACPSCGTYNKRQVLEV.

This sequence belongs to the bacterial ribosomal protein bL32 family.

In Streptomyces avermitilis (strain ATCC 31267 / DSM 46492 / JCM 5070 / NBRC 14893 / NCIMB 12804 / NRRL 8165 / MA-4680), this protein is Large ribosomal subunit protein bL32.